Consider the following 442-residue polypeptide: uncharacterized protein (442 aa).

Helical transmembrane passes span 209 to 229 (FNIW…AYFY), 247 to 267 (IFFL…HTFS), 284 to 304 (VGIS…AFVC), 308 to 328 (LRFI…YTPW), 342 to 362 (IFFF…MFYI), 374 to 394 (PVFK…LHIP), and 402 to 422 (FDII…GVAF).

It is found in the membrane. This is an uncharacterized protein from Schizosaccharomyces pombe (strain 972 / ATCC 24843) (Fission yeast).